A 187-amino-acid chain; its full sequence is MVSTTTFLMLTSLATLTSARSHLTVTIGSNCTLKGPQGGHVFWWRIYDNGWFTKPCDQPGRFFCNGRDLTIINVTANDKGFYYGTDYKSSLDYNIIVLPSTTPPPRTTTFSSSSVANNTISNPTFAALLKRTVNNSTTSHTTISTSTISIIAAVTIGISILVFTITYYACCYRKDKHKGDPLLRFDI.

N-linked (GlcNAc...) asparagine; by host glycosylation is found at Asn-30, Asn-73, Asn-117, Asn-134, and Asn-135.

The protein belongs to the adenoviridae E3_20 family.

The chain is Early E3 20.6 kDa glycoprotein from Human adenovirus B serotype 35 (HAdV-35).